Consider the following 200-residue polypeptide: Cytochrome c biogenesis ATP-binding export protein CcmA (200 aa).

Residues 1 to 200 form the ABC transporter domain; that stretch reads MRLSGRGLRC…TREMRIGAAA (200 aa). Position 35–42 (35–42) interacts with ATP; it reads GRNGAGKT.

Belongs to the ABC transporter superfamily. CcmA exporter (TC 3.A.1.107) family. In terms of assembly, the complex is composed of two ATP-binding proteins (CcmA) and two transmembrane proteins (CcmB).

The protein localises to the cell inner membrane. It carries out the reaction heme b(in) + ATP + H2O = heme b(out) + ADP + phosphate + H(+). In terms of biological role, part of the ABC transporter complex CcmAB involved in the biogenesis of c-type cytochromes; once thought to export heme, this seems not to be the case, but its exact role is uncertain. Responsible for energy coupling to the transport system. In Rhodopseudomonas palustris (strain HaA2), this protein is Cytochrome c biogenesis ATP-binding export protein CcmA.